Here is a 588-residue protein sequence, read N- to C-terminus: Probable urocanate hydratase (588 aa).

A compositionally biased stretch (low complexity) spans 1 to 15 (MDTPSAAAETSEPSA). The tract at residues 1-22 (MDTPSAAAETSEPSAQWQAYRG) is disordered. NAD(+) contacts are provided by residues 62–63 (GG), Q140, 188–190 (GMG), E208, R213, 254–255 (NA), 275–279 (QTSAH), and Y334. Residue C431 is part of the active site. An NAD(+)-binding site is contributed by G520.

The protein belongs to the urocanase family. NAD(+) is required as a cofactor.

It is found in the cytoplasm. The catalysed reaction is 4-imidazolone-5-propanoate = trans-urocanate + H2O. It functions in the pathway amino-acid degradation; L-histidine degradation into L-glutamate; N-formimidoyl-L-glutamate from L-histidine: step 2/3. Functionally, catalyzes the conversion of urocanate to 4-imidazolone-5-propionate. This is Probable urocanate hydratase from Halobacterium salinarum (strain ATCC 29341 / DSM 671 / R1).